The primary structure comprises 160 residues: Large ribosomal subunit protein uL10 (160 aa).

This sequence belongs to the universal ribosomal protein uL10 family. Part of the ribosomal stalk of the 50S ribosomal subunit. The N-terminus interacts with L11 and the large rRNA to form the base of the stalk. The C-terminus forms an elongated spine to which L12 dimers bind in a sequential fashion forming a multimeric L10(L12)X complex.

In terms of biological role, forms part of the ribosomal stalk, playing a central role in the interaction of the ribosome with GTP-bound translation factors. The chain is Large ribosomal subunit protein uL10 from Wolinella succinogenes (strain ATCC 29543 / DSM 1740 / CCUG 13145 / JCM 31913 / LMG 7466 / NCTC 11488 / FDC 602W) (Vibrio succinogenes).